The following is a 95-amino-acid chain: Neutrophil antibiotic peptide NP-4 (95 aa).

The N-terminal stretch at 1–19 (MRTLALLAAILLVTLQAQA) is a signal peptide. The propeptide occupies 20–62 (ELHSGMADDGVDQQQPRAQDLDVAVYIKQDETSPLEVLGAKAG). Intrachain disulfides connect cysteine 65-cysteine 93, cysteine 67-cysteine 82, and cysteine 72-cysteine 92.

This sequence belongs to the alpha-defensin family.

It localises to the secreted. In terms of biological role, microbicidal activity. This Oryctolagus cuniculus (Rabbit) protein is Neutrophil antibiotic peptide NP-4.